The sequence spans 871 residues: MILFDKNKRILKKYAKMVSKINQIESDLRSKKNSELIRLSMVLKEKVNSFEDADEHLFEAFALVREAARRTLGMRPFDVQVMGGIALHEGKVAEMKTGEGKTLAATMPIYLNALIGKGVHLVTVNDYLARRDALWMGPVYLFLGLRVGVINSLGKSYEVVWKNPDLARKAIEENWSVWPDGFNGEVLKEESMNKEAVEAFQVELKEITRKEAYLCDVTYGTNNEFGFDYLRDNLVLDYNDKVQRGHFYAIVDEADSVLIDEARTPLIISGPSKESPSVYRRFAQIAKKFVKDKDFTVDEKARTIILTEEGVAKAEKIIGVENLYDPGNVSLLYHLINALKALHLFKKDVDYVVMNGEVIIVDEFTGRLLPGRRYSGGLHQAIEAKEGVPIKEESITYATITFQNYFRMYEKLAGMTGTAKTEESEFVQVYGMEVVVIPTHKPMIRKDHDDLVFRTQKEKYEKIVEEIEKRYKKGQPVLVGTTSIEKSELLSSILKKKGIPHQVLNAKYHEKEAEIVAKAGQKGMVTIATNMAGRGTDIKLGPGVAELGGLCIIGTERHESRRIDNQLRGRTGRQGDPGESIFFLSLEDDLLRIFGSEQIGKVMNILKIEEGQPIQHPMLSKLIENIQKKVEGINFSIRKTLMEMDDVLDKQRRAVYSLRDQILLEKDYDEYLKDIFEDVVSTRVEEFCSGKNWDIESLKNSLSFFPAGLFDLDEKQFSSSEELHDYLFNRLWEEYQRKKQEIGEDYRKVIRFLMLRIIDDHWRRYLEEVEHVKEAVQLRSYGQKDPIVEFKKETYYMFDEMMRRINDTIANYVLRVVKVSEKDEKEAKEELGKIRLVHEEFNLVNRAMRRATEKKKKKDGLHSFGRIRVKR.

ATP is bound by residues glutamine 80, 98-102, and aspartate 537; that span reads GEGKT.

This sequence belongs to the SecA family. As to quaternary structure, monomer and homodimer. Part of the essential Sec protein translocation apparatus which comprises SecA, SecYEG and auxiliary proteins SecDF. Other proteins may also be involved.

The protein resides in the cell inner membrane. It is found in the cytoplasm. It catalyses the reaction ATP + H2O + cellular proteinSide 1 = ADP + phosphate + cellular proteinSide 2.. Its function is as follows. Part of the Sec protein translocase complex. Interacts with the SecYEG preprotein conducting channel. Has a central role in coupling the hydrolysis of ATP to the transfer of proteins into and across the cell membrane, serving as an ATP-driven molecular motor driving the stepwise translocation of polypeptide chains across the membrane. This chain is Protein translocase subunit SecA, found in Thermotoga sp. (strain RQ2).